Reading from the N-terminus, the 100-residue chain is Urease subunit gamma (100 aa).

It belongs to the urease gamma subunit family. As to quaternary structure, heterotrimer of UreA (gamma), UreB (beta) and UreC (alpha) subunits. Three heterotrimers associate to form the active enzyme.

It is found in the cytoplasm. The enzyme catalyses urea + 2 H2O + H(+) = hydrogencarbonate + 2 NH4(+). The protein operates within nitrogen metabolism; urea degradation; CO(2) and NH(3) from urea (urease route): step 1/1. The sequence is that of Urease subunit gamma from Kocuria rhizophila (strain ATCC 9341 / DSM 348 / NBRC 103217 / DC2201).